The sequence spans 265 residues: Tryptophan synthase alpha chain (265 aa).

Residues glutamate 49 and aspartate 60 each act as proton acceptor in the active site.

It belongs to the TrpA family. Tetramer of two alpha and two beta chains.

The enzyme catalyses (1S,2R)-1-C-(indol-3-yl)glycerol 3-phosphate + L-serine = D-glyceraldehyde 3-phosphate + L-tryptophan + H2O. The protein operates within amino-acid biosynthesis; L-tryptophan biosynthesis; L-tryptophan from chorismate: step 5/5. Its function is as follows. The alpha subunit is responsible for the aldol cleavage of indoleglycerol phosphate to indole and glyceraldehyde 3-phosphate. The chain is Tryptophan synthase alpha chain from Polynucleobacter necessarius subsp. necessarius (strain STIR1).